Consider the following 257-residue polypeptide: Imidazole glycerol phosphate synthase subunit HisF (257 aa).

Active-site residues include D11 and D130.

The protein belongs to the HisA/HisF family. Heterodimer of HisH and HisF.

It localises to the cytoplasm. The enzyme catalyses 5-[(5-phospho-1-deoxy-D-ribulos-1-ylimino)methylamino]-1-(5-phospho-beta-D-ribosyl)imidazole-4-carboxamide + L-glutamine = D-erythro-1-(imidazol-4-yl)glycerol 3-phosphate + 5-amino-1-(5-phospho-beta-D-ribosyl)imidazole-4-carboxamide + L-glutamate + H(+). The protein operates within amino-acid biosynthesis; L-histidine biosynthesis; L-histidine from 5-phospho-alpha-D-ribose 1-diphosphate: step 5/9. Its function is as follows. IGPS catalyzes the conversion of PRFAR and glutamine to IGP, AICAR and glutamate. The HisF subunit catalyzes the cyclization activity that produces IGP and AICAR from PRFAR using the ammonia provided by the HisH subunit. This Shewanella piezotolerans (strain WP3 / JCM 13877) protein is Imidazole glycerol phosphate synthase subunit HisF.